Here is a 248-residue protein sequence, read N- to C-terminus: Isoprenyl transferase (248 aa).

Residue aspartate 23 is part of the active site. Mg(2+) is bound at residue aspartate 23. Substrate is bound by residues 24 to 27 (GNGR), tryptophan 28, arginine 36, histidine 40, and 68 to 70 (STE). Asparagine 71 functions as the Proton acceptor in the catalytic mechanism. Substrate-binding positions include tryptophan 72, arginine 74, arginine 185, and 191-193 (RIS). Residue glutamate 204 participates in Mg(2+) binding.

Belongs to the UPP synthase family. In terms of assembly, homodimer. The cofactor is Mg(2+).

Catalyzes the condensation of isopentenyl diphosphate (IPP) with allylic pyrophosphates generating different type of terpenoids. The protein is Isoprenyl transferase of Neisseria meningitidis serogroup B (strain ATCC BAA-335 / MC58).